Reading from the N-terminus, the 438-residue chain is Thymidine phosphorylase (438 aa).

It belongs to the thymidine/pyrimidine-nucleoside phosphorylase family. As to quaternary structure, homodimer.

The enzyme catalyses thymidine + phosphate = 2-deoxy-alpha-D-ribose 1-phosphate + thymine. It participates in pyrimidine metabolism; dTMP biosynthesis via salvage pathway; dTMP from thymine: step 1/2. Its function is as follows. The enzymes which catalyze the reversible phosphorolysis of pyrimidine nucleosides are involved in the degradation of these compounds and in their utilization as carbon and energy sources, or in the rescue of pyrimidine bases for nucleotide synthesis. The protein is Thymidine phosphorylase of Burkholderia orbicola (strain AU 1054).